The primary structure comprises 336 residues: Foldase protein PrsA (336 aa).

A signal peptide spans 1–22; sequence MKSAKKLLSVLCLGIFILTFTA. Cys23 carries the N-palmitoyl cysteine lipid modification. Cys23 carries S-diacylglycerol cysteine lipidation. In terms of domain architecture, PpiC spans 194–286; the sequence is PNTMNVSHIL…FGYHIIKINS (93 aa).

It belongs to the PrsA family.

The protein localises to the cell membrane. It carries out the reaction [protein]-peptidylproline (omega=180) = [protein]-peptidylproline (omega=0). Its function is as follows. Plays a major role in protein secretion by helping the post-translocational extracellular folding of several secreted proteins. The chain is Foldase protein PrsA from Clostridium botulinum (strain Kyoto / Type A2).